We begin with the raw amino-acid sequence, 456 residues long: MEEENEVVKTFAELGVREELVKACERLGWKNPSKIQAEALPFALEGKDVIGLAQTGSGKTGAFAIPILQALLEYVYDSEPKKGRRPDPAFFACVLSPTRELAIQIAEQFEALGADISLRCAVLVGGIDRMQQTIALGKRPHVIVATPGRLWDHMSDTKGFSLKSLKYLVLDEADRLLNEDFEKSLNQILEEIPLERKTFLFSATMTKKVRKLQRACLRNPVKIEAASKYSTVDTLKQQYRFVAAKYKDCYLVYILSEMPESTSMIFTRTCDGTRFLALVLRSLGFRAIPISGQMTQSKRLGALNKFKAGECNILVCTDVASRGLDIPSVDVVINYDIPTNSKDYIHRVGRTARAGRSGVGISLVNQYELEWYIQIEKLIGKKLPEYPAEEDEVLSLLERVAEAKKLSAMNMKESGGRKRRGEDDEESERFLGGNKDRGNKERGGNKDKKSSKKFKR.

A Q motif motif is present at residues 9–37 (KTFAELGVREELVKACERLGWKNPSKIQA). The Helicase ATP-binding domain maps to 40–223 (LPFALEGKDV…RACLRNPVKI (184 aa)). 53-60 (AQTGSGKT) serves as a coordination point for ATP. The short motif at 171-174 (DEAD) is the DEAD box element. Residues 250–394 (YLVYILSEMP…EYPAEEDEVL (145 aa)) form the Helicase C-terminal domain. Residues 407–456 (SAMNMKESGGRKRRGEDDEESERFLGGNKDRGNKERGGNKDKKSSKKFKR) are disordered. A compositionally biased stretch (basic and acidic residues) spans 434–448 (NKDRGNKERGGNKDK).

Belongs to the DEAD box helicase family. DDX47/RRP3 subfamily. As to expression, expressed in all tissues and organs examined including root, cotyledon, first and second leaves, third and fourth leaves, fifth and sixth leaves, shoot apex, flower, flower bud, cauline leaf and rosette leaves.

It localises to the nucleus. It is found in the nucleolus. The catalysed reaction is ATP + H2O = ADP + phosphate + H(+). Its function is as follows. Involved in leaf polarity establishment by functioning cooperatively with AS2 to repress abaxial genes ARF3, ARF4, KAN1, KAN2, YAB1 and YAB5, and the knox homeobox genes KNAT1, KNAT2, KNAT6, and STM to promote adaxial development in leaf primordia at shoot apical meristems at high temperatures. Involved in the processing of pre-rRNA intermediates at high temperatures. The protein is DEAD-box ATP-dependent RNA helicase 10 (RH10) of Arabidopsis thaliana (Mouse-ear cress).